The following is a 159-amino-acid chain: Phosphopantetheine adenylyltransferase (159 aa).

Thr10 contacts substrate. Residues 10-11 (TF) and His18 each bind ATP. 3 residues coordinate substrate: Lys42, Met74, and Arg88. ATP is bound by residues 89-91 (GLR), Glu99, and 124-130 (WSFISSS).

It belongs to the bacterial CoaD family. In terms of assembly, homohexamer. Mg(2+) is required as a cofactor.

Its subcellular location is the cytoplasm. It carries out the reaction (R)-4'-phosphopantetheine + ATP + H(+) = 3'-dephospho-CoA + diphosphate. It functions in the pathway cofactor biosynthesis; coenzyme A biosynthesis; CoA from (R)-pantothenate: step 4/5. In terms of biological role, reversibly transfers an adenylyl group from ATP to 4'-phosphopantetheine, yielding dephospho-CoA (dPCoA) and pyrophosphate. This Citrobacter koseri (strain ATCC BAA-895 / CDC 4225-83 / SGSC4696) protein is Phosphopantetheine adenylyltransferase.